A 569-amino-acid polypeptide reads, in one-letter code: Hexose transporter HXT8 (569 aa).

The segment at 1–38 is disordered; that stretch reads MTDRKTNLPEEPIFEEAEDDGCPSIENSSHLSVPTVEE. Residues 1-61 lie on the Cytoplasmic side of the membrane; that stretch reads MTDRKTNLPE…EVVVPEKPAS (61 aa). Residues 12 to 21 are compositionally biased toward acidic residues; sequence PIFEEAEDDG. A helical transmembrane segment spans residues 62-82; that stretch reads AYATVSIMCLCMAFGGFMSGW. Topologically, residues 83–118 are extracellular; sequence DTGTISGFVNQTDFLRRFGNYSHSKNTYYLSNVRTG. Asn-92 and Asn-102 each carry an N-linked (GlcNAc...) asparagine glycan. A helical membrane pass occupies residues 119 to 139; that stretch reads LIVSIFNVGSAIGCLFLSKLG. Residues 140 to 145 are Cytoplasmic-facing; that stretch reads DIYGRC. A helical transmembrane segment spans residues 146–166; the sequence is MGLIIVIVVYMVGIVIQIASI. The Extracellular segment spans residues 167-176; it reads DKWYQYFIGR. The chain crosses the membrane as a helical span at residues 177 to 197; that stretch reads IIAGIGAGSISVLAPMLISET. Over 198 to 203 the chain is Cytoplasmic; it reads APKHIR. Residues 204-224 form a helical membrane-spanning segment; that stretch reads GTLLACWQLMVTFAIFLGYCT. The Extracellular segment spans residues 225 to 238; it reads NYGTKTYSNSVQWR. The chain crosses the membrane as a helical span at residues 239–259; it reads VPLGLCFAWAIIMIGGMTFVP. Residues 260–342 are Cytoplasmic-facing; the sequence is ESPRFLVQVG…INSLQQLTGD (83 aa). The helical transmembrane segment at 343–359 threads the bilayer; it reads NYFFYYGTTIFKSVGMN. At 360-365 the chain is on the extracellular side; sequence DSFETS. Residues 366–383 form a helical membrane-spanning segment; it reads IVLGIVNFASCFFSLYSV. At 384–390 the chain is on the cytoplasmic side; it reads DKLGRRR. The chain crosses the membrane as a helical span at residues 391 to 411; the sequence is CLLLGAATMTACMVIYASVGV. The Extracellular segment spans residues 412 to 433; sequence TRLYPNGKSEPSSKGAGNCTIV. N-linked (GlcNAc...) asparagine glycosylation occurs at Asn-429. Residues 434 to 454 traverse the membrane as a helical segment; it reads FTCFYIFCFSCTWGPVCYVII. Topologically, residues 455–471 are cytoplasmic; the sequence is SETFPLRVRSKCMSVAT. The helical transmembrane segment at 472-492 threads the bilayer; the sequence is AANLLWGFLIGFFTPFITSAI. Residue Asn-493 is a topological domain, extracellular. Residues 494–514 form a helical membrane-spanning segment; that stretch reads FYYGYVFMGCLAFSYFYVFFF. Residues 515–569 lie on the Cytoplasmic side of the membrane; that stretch reads VPETKGLTLEEVDEMWMDGVLPWKSESWVPASRRDGDYDNEKLQHDEKPFYKRMF.

It belongs to the major facilitator superfamily. Sugar transporter (TC 2.A.1.1) family.

It is found in the membrane. In terms of biological role, probable glucose transporter. In Saccharomyces cerevisiae (strain ATCC 204508 / S288c) (Baker's yeast), this protein is Hexose transporter HXT8 (HXT8).